The primary structure comprises 537 residues: Glutamyl-tRNA(Gln) amidotransferase subunit B, chloroplastic/mitochondrial (537 aa).

This sequence belongs to the GatB/GatE family. GatB subfamily. In terms of assembly, subunit of the heterotrimeric GatCAB amidotransferase (AdT) complex, composed of A, B and C subunits.

The protein localises to the mitochondrion. Its subcellular location is the plastid. The protein resides in the chloroplast. It catalyses the reaction L-glutamyl-tRNA(Gln) + L-glutamine + ATP + H2O = L-glutaminyl-tRNA(Gln) + L-glutamate + ADP + phosphate + H(+). Functionally, allows the formation of correctly charged Gln-tRNA(Gln) through the transamidation of misacylated Glu-tRNA(Gln) in chloroplasts and mitochondria. The reaction takes place in the presence of glutamine and ATP through an activated gamma-phospho-Glu-tRNA(Gln). This Ostreococcus tauri protein is Glutamyl-tRNA(Gln) amidotransferase subunit B, chloroplastic/mitochondrial.